The sequence spans 271 residues: Dermonecrotic toxin LhSicTox-alphaIA2bv (271 aa).

Residue His3 is part of the active site. Mg(2+) contacts are provided by Glu23 and Asp25. Cystine bridges form between Cys43/Cys49 and Cys45/Cys188. Asp83 contacts Mg(2+).

This sequence belongs to the arthropod phospholipase D family. Class II subfamily. It depends on Mg(2+) as a cofactor. As to expression, expressed by the venom gland.

The protein resides in the secreted. It carries out the reaction an N-(acyl)-sphingosylphosphocholine = an N-(acyl)-sphingosyl-1,3-cyclic phosphate + choline. The enzyme catalyses an N-(acyl)-sphingosylphosphoethanolamine = an N-(acyl)-sphingosyl-1,3-cyclic phosphate + ethanolamine. It catalyses the reaction a 1-acyl-sn-glycero-3-phosphocholine = a 1-acyl-sn-glycero-2,3-cyclic phosphate + choline. The catalysed reaction is a 1-acyl-sn-glycero-3-phosphoethanolamine = a 1-acyl-sn-glycero-2,3-cyclic phosphate + ethanolamine. In terms of biological role, dermonecrotic toxins cleave the phosphodiester linkage between the phosphate and headgroup of certain phospholipids (sphingolipid and lysolipid substrates), forming an alcohol (often choline) and a cyclic phosphate. This toxin acts on sphingomyelin (SM). It may also act on ceramide phosphoethanolamine (CPE), lysophosphatidylcholine (LPC) and lysophosphatidylethanolamine (LPE), but not on lysophosphatidylserine (LPS), and lysophosphatidylglycerol (LPG). It acts by transphosphatidylation, releasing exclusively cyclic phosphate products as second products. Induces dermonecrosis, hemolysis, increased vascular permeability, edema, inflammatory response, and platelet aggregation. This Loxosceles hirsuta (Recluse spider) protein is Dermonecrotic toxin LhSicTox-alphaIA2bv.